We begin with the raw amino-acid sequence, 326 residues long: Fructose-1,6-bisphosphatase class 1 2 (326 aa).

Mg(2+) contacts are provided by Glu-84, Asp-103, Leu-105, and Asp-106. Residues 106 to 109 (DGSS), Asn-198, and Lys-262 each bind substrate. Glu-268 contacts Mg(2+).

The protein belongs to the FBPase class 1 family. In terms of assembly, homotetramer. Mg(2+) serves as cofactor.

Its subcellular location is the cytoplasm. The catalysed reaction is beta-D-fructose 1,6-bisphosphate + H2O = beta-D-fructose 6-phosphate + phosphate. It participates in carbohydrate biosynthesis; gluconeogenesis. The polypeptide is Fructose-1,6-bisphosphatase class 1 2 (Pseudoalteromonas translucida (strain TAC 125)).